Reading from the N-terminus, the 194-residue chain is Imidazoleglycerol-phosphate dehydratase (194 aa).

It belongs to the imidazoleglycerol-phosphate dehydratase family.

It is found in the cytoplasm. The enzyme catalyses D-erythro-1-(imidazol-4-yl)glycerol 3-phosphate = 3-(imidazol-4-yl)-2-oxopropyl phosphate + H2O. Its pathway is amino-acid biosynthesis; L-histidine biosynthesis; L-histidine from 5-phospho-alpha-D-ribose 1-diphosphate: step 6/9. This Streptococcus sanguinis (strain SK36) protein is Imidazoleglycerol-phosphate dehydratase.